A 703-amino-acid polypeptide reads, in one-letter code: Calpain-8 (703 aa).

The region spanning 45 to 344 (LFKDPEFPAC…FSRLEICNLS (300 aa)) is the Calpain catalytic domain. Catalysis depends on residues Cys105, His262, and Asn286. A domain III region spans residues 356-379 (WNLVLFNGHWTRGSTAGGCQNYPA). 3 EF-hand domains span residues 575–610 (FNINTCREMISLLDSNGTGTLGAVEFKTLWLKIQKY), 618–640 (DYNHSGTIDAHEMRTALRKAGFT), and 670–703 (IRLETLFKLFSLLDEDKDGMVQLSLAEWLCCVLV). Asp588, Asn590, Thr592, Thr594, Glu599, Asp618, Asn620, Ser622, Thr624, and Glu629 together coordinate Ca(2+).

The protein belongs to the peptidase C2 family. In terms of assembly, monomer and homooligomer. Interacts with COPS1/GPS1, COPB1, EYA2, NME2, NME4 and TOMM70. It depends on Ca(2+) as a cofactor. Post-translationally, undergoes autolytic cleavage between Ala-5 and Ala-6 which gives rise to fragments extending from Ala-6 to the C-terminus, Ala-6 to the EF-hand 2 domain and from Ala-6 to the beginning of domain III. In terms of tissue distribution, stomach.

It is found in the cytoplasm. Its subcellular location is the golgi apparatus. The catalysed reaction is Broad endopeptidase specificity.. Its function is as follows. Calcium-regulated non-lysosomal thiol-protease. Involved in membrane trafficking in the gastric surface mucus cells (pit cells) and may involve the membrane trafficking of mucus cells via interactions with coat protein. Proteolytically cleaves the beta-subunit of coatomer complex. This Homo sapiens (Human) protein is Calpain-8 (CAPN8).